The primary structure comprises 281 residues: Large ribosomal subunit protein uL2 (281 aa).

A compositionally biased stretch (basic and acidic residues) spans 27–38; the sequence is DSPEKSLTEPLK. Disordered stretches follow at residues 27–59 and 225–281; these read DSPEKSLTEPLKRSGGRNVHGHITRRHQGGGHK and AMNP…ARSQ. A compositionally biased stretch (basic residues) spans 45–59; the sequence is VHGHITRRHQGGGHK.

The protein belongs to the universal ribosomal protein uL2 family. As to quaternary structure, part of the 50S ribosomal subunit. Forms a bridge to the 30S subunit in the 70S ribosome.

Its function is as follows. One of the primary rRNA binding proteins. Required for association of the 30S and 50S subunits to form the 70S ribosome, for tRNA binding and peptide bond formation. It has been suggested to have peptidyltransferase activity; this is somewhat controversial. Makes several contacts with the 16S rRNA in the 70S ribosome. In Myxococcus xanthus (strain DK1622), this protein is Large ribosomal subunit protein uL2.